Here is a 128-residue protein sequence, read N- to C-terminus: Aspartate 1-decarboxylase (128 aa).

The active-site Schiff-base intermediate with substrate; via pyruvic acid is S25. S25 bears the Pyruvic acid (Ser) mark. T57 lines the substrate pocket. Y58 (proton donor) is an active-site residue. A substrate-binding site is contributed by 73–75; sequence GAA.

This sequence belongs to the PanD family. As to quaternary structure, heterooctamer of four alpha and four beta subunits. It depends on pyruvate as a cofactor. Post-translationally, is synthesized initially as an inactive proenzyme, which is activated by self-cleavage at a specific serine bond to produce a beta-subunit with a hydroxyl group at its C-terminus and an alpha-subunit with a pyruvoyl group at its N-terminus.

It is found in the cytoplasm. It catalyses the reaction L-aspartate + H(+) = beta-alanine + CO2. It functions in the pathway cofactor biosynthesis; (R)-pantothenate biosynthesis; beta-alanine from L-aspartate: step 1/1. Its function is as follows. Catalyzes the pyruvoyl-dependent decarboxylation of aspartate to produce beta-alanine. The protein is Aspartate 1-decarboxylase of Chlorobaculum parvum (strain DSM 263 / NCIMB 8327) (Chlorobium vibrioforme subsp. thiosulfatophilum).